The following is a 338-amino-acid chain: MKTAFARDPFTAPATGTYGTIYASRSLPRLSISKFLEDANPEIYELSRYEALGTNRPSSGKRAMQPAVSKPALLETVFTLDIWYRRTNNQNIGNLRDSVSRFLSDDRVREAVMVRLDLDIVVQLKEYWLIVKDKEAQTFADRLAFDSHLFVNRGENANYDLVTQTFIPSDTFLKDNFKTEALKKLLLSVQSHTGLDAGLQGDSSKATYNIGLGQYLEDEALLYRQGVALQQMAFAELELARGAEKEAFPSTFDLSNRPACNLILKRTCKWYQQTFKAEERKEFAKSLWVDDFAEANWNTGNLSFGFSTTLNVIERWRLTRFYVHMYSSVHIYSQKASG.

The protein resides in the virion. Functionally, plays an important role in virus transmission by the insect vector. May participate in the virus stability by binding clamp proteins and surrounding the pentameric turrets present in the virion. This Rice ragged stunt virus (isolate Thailand) (RRSV) protein is Structural protein VP9.